Here is a 196-residue protein sequence, read N- to C-terminus: Probable malonic semialdehyde reductase RutE (196 aa).

It belongs to the nitroreductase family. HadB/RutE subfamily. FMN is required as a cofactor.

It catalyses the reaction 3-hydroxypropanoate + NADP(+) = 3-oxopropanoate + NADPH + H(+). May reduce toxic product malonic semialdehyde to 3-hydroxypropionic acid, which is excreted. This Escherichia coli O7:K1 (strain IAI39 / ExPEC) protein is Probable malonic semialdehyde reductase RutE.